Consider the following 489-residue polypeptide: Carboxyl-terminal-processing peptidase 1, chloroplastic (489 aa).

The span at 1-20 shows a compositional bias: low complexity; the sequence is MRLLLPFSSPLSATSSPSTP. The segment at 1–27 is disordered; it reads MRLLLPFSSPLSATSSPSTPQFIPELP. Residues 189 to 273 form the PDZ domain; sequence FSRMSKYDIT…TFVVLKVKHG (85 aa). Active-site charge relay system residues include serine 403 and lysine 428.

The protein belongs to the peptidase S41A family.

It localises to the plastid. The protein resides in the chloroplast thylakoid lumen. The enzyme catalyses The enzyme shows specific recognition of a C-terminal tripeptide, Xaa-Yaa-Zaa, in which Xaa is preferably Ala or Leu, Yaa is preferably Ala or Tyr, and Zaa is preferably Ala, but then cleaves at a variable distance from the C-terminus. A typical cleavage is -Ala-Ala-|-Arg-Ala-Ala-Lys-Glu-Asn-Tyr-Ala-Leu-Ala-Ala.. Its function is as follows. Protease involved in the C-terminal processing of the chloroplastic D1 protein of photosystem II. This proteolytic processing is necessary to allow the light-driven assembly of the tetranuclear manganese cluster, which is responsible for photosynthetic water oxidation. This chain is Carboxyl-terminal-processing peptidase 1, chloroplastic (CTPA1), found in Arabidopsis thaliana (Mouse-ear cress).